The sequence spans 342 residues: Central glycolytic genes regulator (342 aa).

The H-T-H motif DNA-binding region spans 37–56; that stretch reads RRNLAVSLGLTERVLRSEVT.

This sequence belongs to the SorC transcriptional regulatory family. As to quaternary structure, homotetramer.

In terms of biological role, in the absence of glucose, represses the transcription of the gapA operon, which encodes five key glycolytic enzymes. In Priestia megaterium (strain DSM 319 / IMG 1521) (Bacillus megaterium), this protein is Central glycolytic genes regulator (cggR).